The sequence spans 357 residues: MRGSTFLLLSIVGIYGAILNAAAWSVNNFLMTGPKAYLTYSSSVAAGAQSGMEECKFQFGWERWNCPESALQLSTHNRLRSATRETSFVHAISSAGVMYTLTRNCSLGDFESCGCDDSRNGRVGGRGWVWGGCSDNVEFGERISKLFVDALETGHDTRALINLHNNEVGRLAVKATMKRACKCHGVSGSCSIQTCWLQLADFREIGNYLKMKYDQAHKLEMDKRRMRAGNSADSRGATAETFHHVHSTELVFLEDSPDYCTRNASLGHHGTEGRECLQTGKNLSQWERRSCRRLSTECGLKVEERRTEVVSSCNCKFHWCCTVRCEQCRQLVAKHFCARRDAAVANHTKRRNKGHRR.

Residues M1–G16 form the signal peptide. An intrachain disulfide couples C55 to C66. A glycan (N-linked (GlcNAc...) asparagine) is linked at N104. 9 cysteine pairs are disulfide-bonded: C105–C113, C115–C133, C181–C195, C183–C190, C260–C298, C276–C291, C313–C328, C315–C325, and C320–C321. S187 carries the O-palmitoleoyl serine lipid modification. N-linked (GlcNAc...) asparagine glycans are attached at residues N263 and N282. N346 carries an N-linked (GlcNAc...) asparagine glycan.

Belongs to the Wnt family. In terms of processing, palmitoleoylation is required for efficient binding to frizzled receptors. Depalmitoleoylation leads to Wnt signaling pathway inhibition. Post-translationally, proteolytic processing by tiki1 and tiki2 promotes oxidation and formation of large disulfide-bond oligomers, leading to inactivation of wnt8c. As to expression, cells that form rhombomere 4. Hensen node and the neural plate immediately anterior to it.

It localises to the secreted. The protein resides in the extracellular space. Its subcellular location is the extracellular matrix. In terms of biological role, ligand for members of the frizzled family of seven transmembrane receptors. Probable developmental protein. Is likely to signal over only few cell diameters. May be involved in the regulation of axis formation and in the rhombomere specification. The chain is Protein Wnt-8c (WNT8C) from Gallus gallus (Chicken).